We begin with the raw amino-acid sequence, 101 residues long: Large ribosomal subunit protein uL24 (101 aa).

The protein belongs to the universal ribosomal protein uL24 family. In terms of assembly, part of the 50S ribosomal subunit.

One of two assembly initiator proteins, it binds directly to the 5'-end of the 23S rRNA, where it nucleates assembly of the 50S subunit. In terms of biological role, one of the proteins that surrounds the polypeptide exit tunnel on the outside of the subunit. This is Large ribosomal subunit protein uL24 from Borrelia hermsii (strain HS1 / DAH).